A 435-amino-acid polypeptide reads, in one-letter code: Gamma-glutamyl phosphate reductase (435 aa).

Belongs to the gamma-glutamyl phosphate reductase family.

It is found in the cytoplasm. The catalysed reaction is L-glutamate 5-semialdehyde + phosphate + NADP(+) = L-glutamyl 5-phosphate + NADPH + H(+). It participates in amino-acid biosynthesis; L-proline biosynthesis; L-glutamate 5-semialdehyde from L-glutamate: step 2/2. Catalyzes the NADPH-dependent reduction of L-glutamate 5-phosphate into L-glutamate 5-semialdehyde and phosphate. The product spontaneously undergoes cyclization to form 1-pyrroline-5-carboxylate. This Nostoc punctiforme (strain ATCC 29133 / PCC 73102) protein is Gamma-glutamyl phosphate reductase.